Reading from the N-terminus, the 321-residue chain is MTKYALVGDVGGTNARLALCEIDNGAISQAKTFSTADYDSLEAVIRAYLAEKQQDIKHGCIAIACPITDDWVEMTNHDWAFSTSSMKANLAFDSLEIINDFTAVSMAIPMLSEEHLMQFGGTTPAEDKPVAVYGAGTGLGVAHLVHVDKRWVSLPGEGGHVDFAANSEEEDLILEVLREELGHVSAERILSGNGLVNLYRAIVKSDHRQPEDLKPRDVTERALQDTCTDCRRALSMFCVIMGRFGGNLALNLGTFGGVYIAGGIVPRFLEFFKASGFRAAFEDKGRFKDYVAPIPVYLITHDYPGLLGSGAHLRQTLGRVL.

8 to 13 (GDVGGT) contributes to the ATP binding site.

The protein belongs to the bacterial glucokinase family.

The protein localises to the cytoplasm. The catalysed reaction is D-glucose + ATP = D-glucose 6-phosphate + ADP + H(+). This Erwinia tasmaniensis (strain DSM 17950 / CFBP 7177 / CIP 109463 / NCPPB 4357 / Et1/99) protein is Glucokinase.